We begin with the raw amino-acid sequence, 82 residues long: Large ribosomal subunit protein uL29 (82 aa).

Belongs to the universal ribosomal protein uL29 family.

In Trichodesmium erythraeum (strain IMS101), this protein is Large ribosomal subunit protein uL29.